A 100-amino-acid chain; its full sequence is Urease subunit gamma (100 aa).

Belongs to the urease gamma subunit family. Heterotrimer of UreA (gamma), UreB (beta) and UreC (alpha) subunits. Three heterotrimers associate to form the active enzyme.

It localises to the cytoplasm. The catalysed reaction is urea + 2 H2O + H(+) = hydrogencarbonate + 2 NH4(+). It functions in the pathway nitrogen metabolism; urea degradation; CO(2) and NH(3) from urea (urease route): step 1/1. The protein is Urease subunit gamma of Pseudomonas aeruginosa (strain UCBPP-PA14).